A 276-amino-acid polypeptide reads, in one-letter code: S-adenosylmethionine decarboxylase proenzyme (276 aa).

Ser-124 functions as the Schiff-base intermediate with substrate; via pyruvic acid in the catalytic mechanism. Ser-124 is subject to Pyruvic acid (Ser); by autocatalysis. Catalysis depends on His-129, which acts as the Proton acceptor; for processing activity. Cys-152 (proton donor; for catalytic activity) is an active-site residue.

This sequence belongs to the prokaryotic AdoMetDC family. Type 2 subfamily. In terms of assembly, heterooctamer of four alpha and four beta chains arranged as a tetramer of alpha/beta heterodimers. Pyruvate is required as a cofactor. Post-translationally, is synthesized initially as an inactive proenzyme. Formation of the active enzyme involves a self-maturation process in which the active site pyruvoyl group is generated from an internal serine residue via an autocatalytic post-translational modification. Two non-identical subunits are generated from the proenzyme in this reaction, and the pyruvate is formed at the N-terminus of the alpha chain, which is derived from the carboxyl end of the proenzyme. The post-translation cleavage follows an unusual pathway, termed non-hydrolytic serinolysis, in which the side chain hydroxyl group of the serine supplies its oxygen atom to form the C-terminus of the beta chain, while the remainder of the serine residue undergoes an oxidative deamination to produce ammonia and the pyruvoyl group blocking the N-terminus of the alpha chain.

It catalyses the reaction S-adenosyl-L-methionine + H(+) = S-adenosyl 3-(methylsulfanyl)propylamine + CO2. Its pathway is amine and polyamine biosynthesis; S-adenosylmethioninamine biosynthesis; S-adenosylmethioninamine from S-adenosyl-L-methionine: step 1/1. Functionally, catalyzes the decarboxylation of S-adenosylmethionine to S-adenosylmethioninamine (dcAdoMet), the propylamine donor required for the synthesis of the polyamines spermine and spermidine from the diamine putrescine. The polypeptide is S-adenosylmethionine decarboxylase proenzyme (Desulfitobacterium hafniense (strain DSM 10664 / DCB-2)).